The following is a 429-amino-acid chain: UDP-N-acetylglucosamine 1-carboxyvinyltransferase (429 aa).

22–23 serves as a coordination point for phosphoenolpyruvate; sequence KN. Arg-102 provides a ligand contact to UDP-N-acetyl-alpha-D-glucosamine. Catalysis depends on Cys-126, which acts as the Proton donor. Cys-126 is subject to 2-(S-cysteinyl)pyruvic acid O-phosphothioketal. Residues 131 to 135, 171 to 174, Asp-316, and Ile-338 each bind UDP-N-acetyl-alpha-D-glucosamine; these read RPVDL and KVSV.

This sequence belongs to the EPSP synthase family. MurA subfamily.

The protein resides in the cytoplasm. It catalyses the reaction phosphoenolpyruvate + UDP-N-acetyl-alpha-D-glucosamine = UDP-N-acetyl-3-O-(1-carboxyvinyl)-alpha-D-glucosamine + phosphate. The protein operates within cell wall biogenesis; peptidoglycan biosynthesis. Functionally, cell wall formation. Adds enolpyruvyl to UDP-N-acetylglucosamine. The protein is UDP-N-acetylglucosamine 1-carboxyvinyltransferase of Brucella abortus (strain S19).